We begin with the raw amino-acid sequence, 325 residues long: MNWLTNVVRPKIRNILRRETPENLWIKCPDSGHLVFYKDVEANQFVIPGSNYHMRMGAVARLKSVFDGETWYDIALPEVTADPLKFRDERRYVDRIKDARAKTGLHDAVKVGYGKLENFPVVIAVQDFDFMGGSLGMAAGEAIVRGMELALEKRAPFILFAASGGARMQEGILSLMQMPRTTVGVQMLREAKLPYIVVLTNPTTGGVTASYAMLGDVQLAEPGALIGFAGARVIEQTIREKLPEGFQRAEYLRDHGMVDIVVHRHDLRSTLARLCRILTKSPAAEIEVVTPEPEPVAEAAVVLPAEAVAPPPAAEAAAPPATPPA.

The CoA carboxyltransferase N-terminal domain maps to 24–293; the sequence is LWIKCPDSGH…AEIEVVTPEP (270 aa).

This sequence belongs to the AccD/PCCB family. Acetyl-CoA carboxylase is a heterohexamer composed of biotin carboxyl carrier protein (AccB), biotin carboxylase (AccC) and two subunits each of ACCase subunit alpha (AccA) and ACCase subunit beta (AccD).

The protein localises to the cytoplasm. The enzyme catalyses N(6)-carboxybiotinyl-L-lysyl-[protein] + acetyl-CoA = N(6)-biotinyl-L-lysyl-[protein] + malonyl-CoA. Its pathway is lipid metabolism; malonyl-CoA biosynthesis; malonyl-CoA from acetyl-CoA: step 1/1. Its function is as follows. Component of the acetyl coenzyme A carboxylase (ACC) complex. Biotin carboxylase (BC) catalyzes the carboxylation of biotin on its carrier protein (BCCP) and then the CO(2) group is transferred by the transcarboxylase to acetyl-CoA to form malonyl-CoA. In Rhodopseudomonas palustris (strain BisA53), this protein is Acetyl-coenzyme A carboxylase carboxyl transferase subunit beta.